Reading from the N-terminus, the 732-residue chain is Ets DNA-binding protein pokkuri (732 aa).

One can recognise a PNT domain in the interval 33–117 (SSQLAELKTQ…NVLQMLIIES (85 aa)). Residues 133–295 (SRYPLSPHSH…PPGTPILKDI (163 aa)) form a disordered region. Over residues 141–157 (SHPPTPTWPPLNAPPEN) the composition is skewed to pro residues. Positions 176-193 (NSVTLSPPPSVDSQASSP) are enriched in polar residues. The span at 205 to 240 (GAAPGSAGGSAPAAGGATNTSNPTSSSASSTGSNGS) shows a compositional bias: low complexity. The ETS DNA-binding region spans 396–479 (RLLWDFLQQL…QGERHCYQFL (84 aa)). Disordered regions lie at residues 496 to 548 (QSTP…NGPM), 590 to 647 (GPPP…TATS), and 674 to 732 (VAAS…HMQQ). Residues 506-539 (SPSMPQGSSQAPGSPAGQNWNPQQQSQQQQQSPQ) show a composition bias toward low complexity. At serine 543 the chain carries Phosphoserine. Residues 637–647 (LSVSSKSTATS) show a composition bias toward polar residues. Phosphoserine is present on residues serine 677, serine 682, and serine 696. Residues 690–709 (AGASNASSSPRPMDQASEQA) are compositionally biased toward polar residues.

The protein belongs to the ETS family. Post-translationally, phosphorylated in response to MAPK signaling. May be phosphorylated by rl. As to expression, expressed in R7 and cone cells of the eye.

It localises to the nucleus. Functionally, ets-related protein that functions as a negative regulator of photoreceptor development acting antagonistically to pnt and the proneural signal mediated by RAS. It acts upstream of SINA to inhibit R7 development. This is Ets DNA-binding protein pokkuri (aop) from Drosophila melanogaster (Fruit fly).